We begin with the raw amino-acid sequence, 72 residues long: MAKDDVIQMQGEVIENLPNATFRVKLENGHVVLGHISGKMRMHYIRIFPGDKVTVELTPYDLSRARIVFRAK.

The region spanning 1–72 (MAKDDVIQMQ…SRARIVFRAK (72 aa)) is the S1-like domain.

It belongs to the IF-1 family. Component of the 30S ribosomal translation pre-initiation complex which assembles on the 30S ribosome in the order IF-2 and IF-3, IF-1 and N-formylmethionyl-tRNA(fMet); mRNA recruitment can occur at any time during PIC assembly.

Its subcellular location is the cytoplasm. Functionally, one of the essential components for the initiation of protein synthesis. Stabilizes the binding of IF-2 and IF-3 on the 30S subunit to which N-formylmethionyl-tRNA(fMet) subsequently binds. Helps modulate mRNA selection, yielding the 30S pre-initiation complex (PIC). Upon addition of the 50S ribosomal subunit IF-1, IF-2 and IF-3 are released leaving the mature 70S translation initiation complex. In Burkholderia mallei (strain NCTC 10247), this protein is Translation initiation factor IF-1.